A 209-amino-acid chain; its full sequence is Translation initiation factor 2 subunit beta (209 aa).

One can recognise a TRAM domain in the interval T144 to E202.

It belongs to the eIF-2-beta/eIF-5 family. In terms of assembly, heterotrimer composed of an alpha, a beta and a gamma chain.

Its function is as follows. eIF-2 functions in the early steps of protein synthesis by forming a ternary complex with GTP and initiator tRNA. The polypeptide is Translation initiation factor 2 subunit beta (eif2b) (Thermoplasma acidophilum (strain ATCC 25905 / DSM 1728 / JCM 9062 / NBRC 15155 / AMRC-C165)).